The following is a 362-amino-acid chain: Outer envelope protein 39, chloroplastic (362 aa).

Belongs to the OEP80 (TC 1.B.33.2) family. Expressed in germinating seeds. Expressed in the vasculature of roots, cotyledons and leaves.

The protein resides in the plastid. The protein localises to the chloroplast outer membrane. In terms of biological role, beta-barrel pore-forming protein which possesses voltage-dependent channel activity. Required for proper plastid development. Involved in the maintenance of metabolic homeostasis of full-grown plants. The protein is Outer envelope protein 39, chloroplastic of Arabidopsis thaliana (Mouse-ear cress).